The following is a 119-amino-acid chain: uncharacterized protein (119 aa).

The active site involves Cys13.

The protein belongs to the ArsC family.

This is an uncharacterized protein from Escherichia coli (strain K12).